We begin with the raw amino-acid sequence, 65 residues long: Large ribosomal subunit protein uL29 (65 aa).

It belongs to the universal ribosomal protein uL29 family.

The protein is Large ribosomal subunit protein uL29 of Bacteroides thetaiotaomicron (strain ATCC 29148 / DSM 2079 / JCM 5827 / CCUG 10774 / NCTC 10582 / VPI-5482 / E50).